Here is a 286-residue protein sequence, read N- to C-terminus: Aquaporin PIP1-3 (286 aa).

Met-1 is subject to N-acetylmethionine. Residues 1 to 33 (MEGKEEDVRVGANKFPERQPIGTSAQTDKDYKE) are disordered. At 1–54 (MEGKEEDVRVGANKFPERQPIGTSAQTDKDYKEPPPAPFFEPGELSSWSFYRAG) the chain is on the cytoplasmic side. A helical membrane pass occupies residues 55 to 75 (IAEFIATFLFLYITVLTVMGV). At 76 to 81 (KRAPNM) the chain is on the extracellular side. Residues 82–102 (CASVGIQGIAWAFGGMIFALV) form a helical membrane-spanning segment. At 103-132 (YCTAGISGGHINPAVTFGLFLARKLSLTRA) the chain is on the cytoplasmic side. The NPA 1 motif lies at 114–116 (NPA). A helical transmembrane segment spans residues 133-153 (VFYIVMQCLGAICGAGVVKGF). The Extracellular portion of the chain corresponds to 154-174 (QPNPYQTLGGGANTVAHGYTK). A helical transmembrane segment spans residues 175 to 195 (GSGLGAEIIGTFVLVYTVFSA). At 196-208 (TDAKRSARDSHVP) the chain is on the cytoplasmic side. A helical membrane pass occupies residues 209–229 (ILAPLPIGFAVFLVHLATIPI). Topologically, residues 230-256 (TGTGINPARSLGAAIIYNKDHAWDDHW) are extracellular. An NPA 2 motif is present at residues 235-237 (NPA). Residues 257–277 (IFWVGPFIGAALAALYHQLVI) traverse the membrane as a helical segment. At 278 to 286 (RAIPFKSRS) the chain is on the cytoplasmic side. Ser-284 carries the post-translational modification Phosphoserine.

The protein belongs to the MIP/aquaporin (TC 1.A.8) family. PIP (TC 1.A.8.11) subfamily. Expressed in roots, above ground, ripening fruit, flower buds, green siliques and senescing leaves.

The protein localises to the cell membrane. Functionally, water channel required to facilitate the transport of water across cell membrane. Its function is impaired by Hg(2+). In Arabidopsis thaliana (Mouse-ear cress), this protein is Aquaporin PIP1-3 (PIP1-3).